A 211-amino-acid chain; its full sequence is DNA-directed RNA polymerases I, II, and III subunit RPABC1 (211 aa).

It belongs to the archaeal Rpo5/eukaryotic RPB5 RNA polymerase subunit family. In terms of assembly, component of the RNA polymerase I (Pol I), RNA polymerase II (Pol II) and RNA polymerase III (Pol III) complexes consisting of at least 13, 12 and 17 subunits, respectively. In RNA Pol II, this subunit is present in 2-fold molar excess over the other subunits.

It is found in the nucleus. DNA-dependent RNA polymerase catalyzes the transcription of DNA into RNA using the four ribonucleoside triphosphates as substrates. Common component of RNA polymerases I, II and III which synthesize ribosomal RNA precursors, mRNA precursors and many functional non-coding RNAs, and small RNAs, such as 5S rRNA and tRNAs, respectively. Pol II is the central component of the basal RNA polymerase II transcription machinery. Pols are composed of mobile elements that move relative to each other. In Pol II, RPB5 is part of the lower jaw surrounding the central large cleft and thought to grab the incoming DNA template. Seems to be the major component in this process. The sequence is that of DNA-directed RNA polymerases I, II, and III subunit RPABC1 from Caenorhabditis briggsae.